The following is a 473-amino-acid chain: Phosphatidylserine synthase 1 (473 aa).

Ala2 is modified (N-acetylalanine). Residues 2 to 35 (ASCVGSRTLSKDDVNYKMHFRMINEQQVEDITID) lie on the Cytoplasmic side of the membrane. The helical transmembrane segment at 36-56 (FFYRPHTITLLSFTIVSLMYF) threads the bilayer. Topologically, residues 57 to 72 (AFTRDDSVPEDNIWRG) are lumenal. Residues 73–93 (ILSVIFFFLIISVLAFPNGPF) traverse the membrane as a helical segment. Residues 94–102 (TRPHPALWR) are Cytoplasmic-facing. Residues 103–123 (MVFGLSVLYFLFLVFLLFLNF) form a helical membrane-spanning segment. Topologically, residues 124-186 (EQVKSLMYWL…AMKALLIRSY (63 aa)) are lumenal. The chain crosses the membrane as a helical span at residues 187 to 207 (GLCWTISITWELTELFFMHLL). Topologically, residues 208–216 (PNFAECWWD) are cytoplasmic. Residues 217 to 237 (QVILDILLCNGGGIWLGMVVC) form a helical membrane-spanning segment. At 238–286 (RFLEMRTYHWASFKDIHTTTGKIKRAVLQFTPASWTYVRWFDPKSSFQR) the chain is on the lumenal side. Residues 287-307 (VAGVYLFMIIWQLTELNTFFL) form a helical membrane-spanning segment. The Cytoplasmic portion of the chain corresponds to 308–319 (KHIFVFQASHPL). Residues 320–342 (SWGRILFIGGITAPTVRQYYAYL) form a helical membrane-spanning segment. Over 343-355 (TDTQCKRVGTQCW) the chain is Lumenal. The helical transmembrane segment at 356–376 (VFGVIGFLEAIVCIKFGQDLF) threads the bilayer. Residues 377-383 (SKTQILY) are Cytoplasmic-facing. The chain crosses the membrane as a helical span at residues 384-404 (VVLWLLCVAFTTFLCLYGMIW). Topologically, residues 405-473 (YAEHYGHREK…SKVTNGVGKK (69 aa)) are lumenal. Phosphoserine occurs at positions 417, 425, 442, and 454. Residues 430–473 (WHHRKGTKGSEDSPPKHAGNNESHSSRRRNRHSKSKVTNGVGKK) are disordered. Positions 455 to 464 (SRRRNRHSKS) are enriched in basic residues.

It belongs to the phosphatidyl serine synthase family.

The protein resides in the endoplasmic reticulum membrane. The catalysed reaction is a 1,2-diacyl-sn-glycero-3-phosphoethanolamine + L-serine = a 1,2-diacyl-sn-glycero-3-phospho-L-serine + ethanolamine. It catalyses the reaction a 1,2-diacyl-sn-glycero-3-phosphocholine + L-serine = a 1,2-diacyl-sn-glycero-3-phospho-L-serine + choline. The protein operates within phospholipid metabolism; phosphatidylserine biosynthesis. Requires calcium ions. Inhibited by exogenous phosphatidylserine. Functionally, catalyzes a base-exchange reaction in which the polar head group of phosphatidylethanolamine (PE) or phosphatidylcholine (PC) is replaced by L-serine. Catalyzes mainly the conversion of phosphatidylcholine. Also converts, in vitro and to a lesser extent, phosphatidylethanolamine. The protein is Phosphatidylserine synthase 1 (PTDSS1) of Homo sapiens (Human).